Consider the following 348-residue polypeptide: Hereditary hemochromatosis protein homolog (348 aa).

The first 22 residues, 1-22 (MGPRARPALFFLILLRTVAAQG), serve as a signal peptide directing secretion. An alpha-1 region spans residues 23 to 114 (RPPRSHSLRY…IMDNHNHSKE (92 aa)). The Extracellular portion of the chain corresponds to 23–306 (RPPRSHSLRY…WEPSLSNTLV (284 aa)). N-linked (GlcNAc...) asparagine glycosylation is found at Asn110, Asn130, and Asn234. Residues 115-205 (SHTLQVILGC…ELGRGVLDQQ (91 aa)) form an alpha-2 region. Intrachain disulfides connect Cys124-Cys187 and Cys225-Cys282. The interval 206 to 297 (VPPLVKVTHH…GLDQPLTATW (92 aa)) is alpha-3. The region spanning 207–296 (PPLVKVTHHV…PGLDQPLTAT (90 aa)) is the Ig-like C1-type domain. Residues 298 to 306 (EPSLSNTLV) are connecting peptide. Residues 307 to 330 (TGVISGIAVCVIIFLIGILFRILR) traverse the membrane as a helical segment. At 331–348 (KRQASRGAMGDYVLAECE) the chain is on the cytoplasmic side.

The protein belongs to the MHC class I family. In terms of assembly, binds TFR through the extracellular domain in a pH-dependent manner.

Its subcellular location is the cell membrane. Binds to transferrin receptor (TFR) and reduces its affinity for iron-loaded transferrin. The polypeptide is Hereditary hemochromatosis protein homolog (HFE) (Rhinoceros unicornis (Greater Indian rhinoceros)).